A 1004-amino-acid polypeptide reads, in one-letter code: DNA-directed RNA polymerase subunit beta' (1004 aa).

3 residues coordinate Mg(2+): aspartate 388, aspartate 390, and aspartate 392. Residues cysteine 757, cysteine 831, cysteine 838, and cysteine 841 each contribute to the Zn(2+) site.

It belongs to the RNA polymerase beta' chain family. As to quaternary structure, the RNAP catalytic core consists of 2 alpha, 1 beta, 1 beta' and 1 omega subunit. When a sigma factor is associated with the core the holoenzyme is formed, which can initiate transcription. Mg(2+) serves as cofactor. It depends on Zn(2+) as a cofactor.

The enzyme catalyses RNA(n) + a ribonucleoside 5'-triphosphate = RNA(n+1) + diphosphate. DNA-dependent RNA polymerase catalyzes the transcription of DNA into RNA using the four ribonucleoside triphosphates as substrates. The chain is DNA-directed RNA polymerase subunit beta' from Oenococcus oeni (Leuconostoc oenos).